The primary structure comprises 200 residues: Ras-related protein RABF2b (200 aa).

Residue Gly17–Ser25 coordinates GTP. The Effector region signature appears at Gln39–Phe47. Residues Asp65–Gln69, Asn123–Asp126, and Ser153–Ala154 contribute to the GTP site. 2 S-geranylgeranyl cysteine lipidation sites follow: Cys198 and Cys199.

It belongs to the small GTPase superfamily. Rab family. As to quaternary structure, interacts with VPS9A homodimer. Interacts with TCTP1. Interacts with MON1. Interacts with EREX (via PX domain). Binds to VPS3. Expressed in roots and actively dividing cells.

Its subcellular location is the early endosome membrane. The protein resides in the endosome membrane. The protein localises to the prevacuolar compartment membrane. It is found in the endosome. It localises to the multivesicular body membrane. Its subcellular location is the cell membrane. The protein resides in the cytoplasm. With respect to regulation, regulated by guanine nucleotide exchange factors (GEFs) which promote the exchange of bound GDP for free GTP. Functionally, endosomal protein that may be involved in endocytosis. Involved in the trafficking of proteins from prevacuolar compartments (PVCs) to vacuoles. May activate the MON1-CCZ1 complex which acts as guanine nucleotide exchange factors (GEF) for Rab7 protein family, and serves as a link between Rab5 and Rab7 families in PVCs, and mediates PVC maturation. Involved in vacuolar transport of storage proteins with EREX as effector. Regulates membrane trafficking to protein storage vacuoles (PSVs). This is Ras-related protein RABF2b from Arabidopsis thaliana (Mouse-ear cress).